The sequence spans 302 residues: tRNA dimethylallyltransferase 1 (302 aa).

6–13 (GPTACGKT) contributes to the ATP binding site. 8-13 (TACGKT) lines the substrate pocket. Interaction with substrate tRNA regions lie at residues 31–34 (DSRQ) and 154–158 (QRAIR).

The protein belongs to the IPP transferase family. In terms of assembly, monomer. Requires Mg(2+) as cofactor.

It catalyses the reaction adenosine(37) in tRNA + dimethylallyl diphosphate = N(6)-dimethylallyladenosine(37) in tRNA + diphosphate. Catalyzes the transfer of a dimethylallyl group onto the adenine at position 37 in tRNAs that read codons beginning with uridine, leading to the formation of N6-(dimethylallyl)adenosine (i(6)A). The polypeptide is tRNA dimethylallyltransferase 1 (Porphyromonas gingivalis (strain ATCC 33277 / DSM 20709 / CIP 103683 / JCM 12257 / NCTC 11834 / 2561)).